Reading from the N-terminus, the 416-residue chain is 3-oxoacyl-[acyl-carrier-protein] synthase 1 (416 aa).

Residues 11–415 (FPSVVVTAVT…GHNVALAFGR (405 aa)) enclose the Ketosynthase family 3 (KS3) domain. Residues Cys-171, His-311, and His-345 each act as for beta-ketoacyl synthase activity in the active site. 2 residues coordinate substrate: His-311 and His-345.

It belongs to the thiolase-like superfamily. Beta-ketoacyl-ACP synthases family.

The protein resides in the cytoplasm. The catalysed reaction is an ultra-long-chain mono-unsaturated fatty acyl-[ACP] + malonyl-[ACP] + H(+) = a 3-oxo-ultra-long-chain mono-unsaturated fatty acyl-[ACP] + holo-[ACP] + CO2. It functions in the pathway lipid metabolism; mycolic acid biosynthesis. Its function is as follows. Part of the mycobacterial fatty acid elongation system FAS-II, which is involved in mycolic acid biosynthesis. Catalyzes the elongation of long chain acyl-ACP substrates by the addition of two carbons from malonyl-ACP to an acyl acceptor. Involved in the initial extension of the mycolate chain and forms monounsaturated fatty acids that averaged 40 carbons in length. The sequence is that of 3-oxoacyl-[acyl-carrier-protein] synthase 1 (kasA) from Mycobacterium tuberculosis (strain ATCC 35801 / TMC 107 / Erdman).